We begin with the raw amino-acid sequence, 170 residues long: Allophycocyanin subunit beta-18 (170 aa).

Asparagine 74 is modified (N4-methylasparagine). Residue cysteine 84 participates in (2R,3E)-phycocyanobilin binding.

This sequence belongs to the phycobiliprotein family. Heterodimer of an alpha and a beta chain. Contains one covalently linked bilin chromophore.

It localises to the plastid. The protein localises to the chloroplast thylakoid membrane. In terms of biological role, light-harvesting photosynthetic bile pigment-protein from the phycobiliprotein complex. Allophycocyanin has a maximum absorption at approximately 650 nanometers. This Cyanidium caldarium (Red alga) protein is Allophycocyanin subunit beta-18 (apcF).